The primary structure comprises 626 residues: Basic helix-loop-helix ARNT-like protein 1 (626 aa).

A disordered region spans residues Met-1–His-58. Ser-17 is subject to Phosphoserine; by GSK3-beta. A compositionally biased stretch (low complexity) spans Ser-17–Gly-32. At Thr-21 the chain carries Phosphothreonine; by GSK3-beta. The Nuclear localization signal motif lies at Asn-36 to Gly-41. The 54-residue stretch at Asn-72–Leu-125 folds into the bHLH domain. Ser-78 is subject to Phosphoserine. Phosphoserine; by CK2 is present on Ser-90. The Nuclear export signal 1 signature appears at Leu-142–Leu-152. The 73-residue stretch at Ser-143–Pro-215 folds into the PAS 1 domain. Lys-252 is covalently cross-linked (Glycyl lysine isopeptide (Lys-Gly) (interchain with G-Cter in SUMO2 and SUMO3)). Lys-259 is covalently cross-linked (Glycyl lysine isopeptide (Lys-Gly) (interchain with G-Cter in SUMO); alternate). Lys-259 participates in a covalent cross-link: Glycyl lysine isopeptide (Lys-Gly) (interchain with G-Cter in SUMO2); alternate. In terms of domain architecture, PAS 2 spans Pro-326 to Arg-396. The Nuclear export signal 2 signature appears at Leu-361–Leu-369. Residues Thr-401–Asn-444 form the PAC domain. Disordered regions lie at residues Ser-459–Ala-492 and Gly-511–Asn-595. Residues Arg-508–Gln-588 form an interaction with CIART region. Residues Gly-511 to Pro-521 are compositionally biased toward low complexity. Lys-538 carries the N6-acetyllysine modification.

As to quaternary structure, component of the circadian clock oscillator which includes the CRY1/2 proteins, CLOCK or NPAS2, BMAL1 or BMAL2, CSNK1D and/or CSNK1E, TIMELESS and the PER1/2/3 proteins. Forms a heterodimer with CLOCK. The CLOCK-BMAL1 heterodimer is required for E-box-dependent transactivation, for CLOCK nuclear translocation and degradation, and, for phosphorylation of both CLOCK and BMAL1. Part of a nuclear complex which also includes RACK1 and PRKCA; RACK1 and PRKCA are recruited to the complex in a circadian manner. Interacts with NPAS2. Interacts with EZH2. Interacts with SUMO3. Interacts with SIRT1. Interacts with AHR. Interacts with ID1, ID2 and ID3. Interacts with DDX4. Interacts with OGT. Interacts with EED and SUZ12. Interacts with MTA1. Interacts with CIART. Interacts with HSP90. Interacts with KAT2B and EP300. Interacts with BHLHE40/DEC1 and BHLHE41/DEC2. Interacts with RELB and the interaction is enhanced in the presence of CLOCK. Interacts with PER1, PER2, CRY1 and CRY2 and this interaction requires a translocation to the nucleus. Interaction of the CLOCK-BMAL1 heterodimer with PER or CRY inhibits transcription activation. Interaction of the CLOCK-BMAL1 with CRY1 is independent of DNA but with PER2 is off DNA. The CLOCK-BMAL1 heterodimer interacts with GSK3B. Interacts with KDM5A. Interacts with KMT2A; in a circadian manner. Interacts with UBE3A. Interacts with PRKCG. Interacts with MAGEL2. Interacts with NCOA2. Interacts with THRAP3. The CLOCK-BMAL1 heterodimer interacts with PASD1. Interacts with PASD1. Interacts with USP9X. Interacts with PIWIL2 (via PIWI domain). Interacts with HDAC3. Interacts with HNF4A. Post-translationally, ubiquitinated, leading to its proteasomal degradation. Deubiquitinated by USP9X. In terms of processing, O-glycosylated; contains O-GlcNAc. O-glycosylation by OGT prevents protein degradation by inhibiting ubiquitination. It also stabilizes the CLOCK-BMAL1 heterodimer thereby increasing CLOCK-BMAL1-mediated transcription of genes in the negative loop of the circadian clock such as PER1/2/3 and CRY1/2. Acetylated on Lys-538 by CLOCK during the repression phase of the circadian cycle. Acetylation facilitates recruitment of CRY1 protein and initiates the repression phase of the circadian cycle. Acetylated at Lys-538 by KAT5 during the activation phase of the cycle, leading to recruitment of the positive transcription elongation factor b (P-TEFb) and BRD4, followed by productive elongation of circadian transcripts. Deacetylated by SIRT1, which may result in decreased protein stability. Post-translationally, phosphorylated upon dimerization with CLOCK. Phosphorylation enhances the transcriptional activity, alters the subcellular localization and decreases the stability of the CLOCK-BMAL1 heterodimer by promoting its degradation. Phosphorylation shows circadian variations in the liver with a peak between CT10 to CT14. Phosphorylation at Ser-90 by CK2 is essential for its nuclear localization, its interaction with CLOCK and controls CLOCK nuclear entry. Dephosphorylation at Ser-78 is important for dimerization with CLOCK and transcriptional activity. In terms of processing, sumoylated on Lys-259 upon dimerization with CLOCK. Predominantly conjugated to poly-SUMO2/3 rather than SUMO1 and the level of these conjugates undergo rhythmic variation, peaking at CT9-CT12. Sumoylation localizes it exclusively to the PML body and promotes its ubiquitination in the PML body, ubiquitin-dependent proteasomal degradation and the transcriptional activity of the CLOCK-BMAL1 heterodimer. Undergoes lysosome-mediated degradation in a time-dependent manner in the liver.

The protein localises to the nucleus. It localises to the cytoplasm. The protein resides in the PML body. Transcriptional activator which forms a core component of the circadian clock. The circadian clock, an internal time-keeping system, regulates various physiological processes through the generation of approximately 24 hour circadian rhythms in gene expression, which are translated into rhythms in metabolism and behavior. It is derived from the Latin roots 'circa' (about) and 'diem' (day) and acts as an important regulator of a wide array of physiological functions including metabolism, sleep, body temperature, blood pressure, endocrine, immune, cardiovascular, and renal function. Consists of two major components: the central clock, residing in the suprachiasmatic nucleus (SCN) of the brain, and the peripheral clocks that are present in nearly every tissue and organ system. Both the central and peripheral clocks can be reset by environmental cues, also known as Zeitgebers (German for 'timegivers'). The predominant Zeitgeber for the central clock is light, which is sensed by retina and signals directly to the SCN. The central clock entrains the peripheral clocks through neuronal and hormonal signals, body temperature and feeding-related cues, aligning all clocks with the external light/dark cycle. Circadian rhythms allow an organism to achieve temporal homeostasis with its environment at the molecular level by regulating gene expression to create a peak of protein expression once every 24 hours to control when a particular physiological process is most active with respect to the solar day. Transcription and translation of core clock components (CLOCK, NPAS2, BMAL1, BMAL2, PER1, PER2, PER3, CRY1 and CRY2) plays a critical role in rhythm generation, whereas delays imposed by post-translational modifications (PTMs) are important for determining the period (tau) of the rhythms (tau refers to the period of a rhythm and is the length, in time, of one complete cycle). A diurnal rhythm is synchronized with the day/night cycle, while the ultradian and infradian rhythms have a period shorter and longer than 24 hours, respectively. Disruptions in the circadian rhythms contribute to the pathology of cardiovascular diseases, cancer, metabolic syndromes and aging. A transcription/translation feedback loop (TTFL) forms the core of the molecular circadian clock mechanism. Transcription factors, CLOCK or NPAS2 and BMAL1 or BMAL2, form the positive limb of the feedback loop, act in the form of a heterodimer and activate the transcription of core clock genes and clock-controlled genes (involved in key metabolic processes), harboring E-box elements (5'-CACGTG-3') within their promoters. The core clock genes: PER1/2/3 and CRY1/2 which are transcriptional repressors form the negative limb of the feedback loop and interact with the CLOCK|NPAS2-BMAL1|BMAL2 heterodimer inhibiting its activity and thereby negatively regulating their own expression. This heterodimer also activates nuclear receptors NR1D1/2 and RORA/B/G, which form a second feedback loop and which activate and repress BMAL1 transcription, respectively. BMAL1 positively regulates myogenesis and negatively regulates adipogenesis via the transcriptional control of the genes of the canonical Wnt signaling pathway. Plays a role in normal pancreatic beta-cell function; regulates glucose-stimulated insulin secretion via the regulation of antioxidant genes NFE2L2/NRF2 and its targets SESN2, PRDX3, CCLC and CCLM. Negatively regulates the mTORC1 signaling pathway; regulates the expression of MTOR and DEPTOR. Controls diurnal oscillations of Ly6C inflammatory monocytes; rhythmic recruitment of the PRC2 complex imparts diurnal variation to chemokine expression that is necessary to sustain Ly6C monocyte rhythms. Regulates the expression of HSD3B2, STAR, PTGS2, CYP11A1, CYP19A1 and LHCGR in the ovary and also the genes involved in hair growth. Plays an important role in adult hippocampal neurogenesis by regulating the timely entry of neural stem/progenitor cells (NSPCs) into the cell cycle and the number of cell divisions that take place prior to cell-cycle exit. Regulates the circadian expression of CIART and KLF11. The CLOCK-BMAL1 heterodimer regulates the circadian expression of SERPINE1/PAI1, VWF, B3, CCRN4L/NOC, NAMPT, DBP, MYOD1, PPARGC1A, PPARGC1B, SIRT1, GYS2, F7, NGFR, GNRHR, BHLHE40/DEC1, ATF4, MTA1, KLF10 and also genes implicated in glucose and lipid metabolism. Promotes rhythmic chromatin opening, regulating the DNA accessibility of other transcription factors. The NPAS2-BMAL1 heterodimer positively regulates the expression of MAOA, F7 and LDHA and modulates the circadian rhythm of daytime contrast sensitivity by regulating the rhythmic expression of adenylate cyclase type 1 (ADCY1) in the retina. The preferred binding motif for the CLOCK-BMAL1 heterodimer is 5'-CACGTGA-3', which contains a flanking adenine nucleotide at the 3-prime end of the canonical 6-nucleotide E-box sequence. CLOCK specifically binds to the half-site 5'-CAC-3', while BMAL1 binds to the half-site 5'-GTGA-3'. The CLOCK-BMAL1 heterodimer also recognizes the non-canonical E-box motifs 5'-AACGTGA-3' and 5'-CATGTGA-3'. Essential for the rhythmic interaction of CLOCK with ASS1 and plays a critical role in positively regulating CLOCK-mediated acetylation of ASS1. Plays a role in protecting against lethal sepsis by limiting the expression of immune checkpoint protein CD274 in macrophages in a PKM2-dependent manner. Regulates the diurnal rhythms of skeletal muscle metabolism via transcriptional activation of genes promoting triglyceride synthesis (DGAT2) and metabolic efficiency (COQ10B). The sequence is that of Basic helix-loop-helix ARNT-like protein 1 (BMAL1) from Mesocricetus auratus (Golden hamster).